A 521-amino-acid chain; its full sequence is Cytokinin dehydrogenase 9 (521 aa).

The first 22 residues, Met-1 to Thr-22, serve as a signal peptide directing secretion. Asn-57 carries N-linked (GlcNAc...) asparagine glycosylation. The 179-residue stretch at Ser-59 to Ala-237 folds into the FAD-binding PCMH-type domain. Ala-95, Gly-97, and Gly-99 together coordinate FAD. The residue at position 100 (His-100) is a Pros-8alpha-FAD histidine. FAD contacts are provided by Ser-101, Gln-105, Asp-161, Thr-166, Ser-172, Val-176, and Ile-227. Residues Asn-278, Asn-412, and Asn-418 are each glycosylated (N-linked (GlcNAc...) asparagine). Residue Tyr-469 participates in FAD binding. A glycan (N-linked (GlcNAc...) asparagine) is linked at Asn-472. Gln-507 contributes to the FAD binding site.

This sequence belongs to the oxygen-dependent FAD-linked oxidoreductase family. Monomer. It depends on FAD as a cofactor. In terms of tissue distribution, expressed in inflorescence meristems.

It localises to the secreted. It is found in the extracellular space. The protein localises to the cytoplasm. The protein resides in the cytosol. Its subcellular location is the nucleus. It carries out the reaction N(6)-dimethylallyladenine + A + H2O = 3-methyl-2-butenal + adenine + AH2. Its function is as follows. Catalyzes the oxidation of cytokinins, a family of N(6)-substituted adenine derivatives that are plant hormones, where the substituent is an isopentenyl group. Possesses cytokinin oxidase activity toward trans-zeatin (tZ) and N6-(2-isopentenyl)adenine (2iP) in vitro. Functions as a primary strigolactone-responsive gene to regulate rice tillering, plant height, and panicle size, likely via a secondary response gene, RR5, which encodes a cytokinin-inducible rice type-A response regulator that seems to act as negative regulator of the cytokinin signaling. This chain is Cytokinin dehydrogenase 9, found in Oryza sativa subsp. japonica (Rice).